We begin with the raw amino-acid sequence, 676 residues long: Envelope glycoprotein (676 aa).

The signal sequence occupies residues 1–32 (MGVTGILQLPRDRFKRTSFFLWVIILFQRTFS). At 33-650 (IPLGVIHNST…NDNWWTGWRQ (618 aa)) the chain is on the extracellular side. Asparagine 40 carries an N-linked (GlcNAc...) asparagine; by host glycan. 5 disulfides stabilise this stretch: cysteine 53–cysteine 609, cysteine 108–cysteine 135, cysteine 121–cysteine 147, cysteine 511–cysteine 556, and cysteine 601–cysteine 608. Residues 54-201 (RDKLSSTNQL…DFFSSHPLRE (148 aa)) are receptor-binding. N-linked (GlcNAc...) asparagine; by host glycosylation is found at asparagine 204, asparagine 228, asparagine 238, asparagine 257, asparagine 268, asparagine 296, asparagine 317, asparagine 333, asparagine 346, asparagine 386, and asparagine 413. The interval 305–485 (ELSFTAVSNR…SGKLGLITNT (181 aa)) is mucin-like region. Residues 314-335 (RAKNISGQSPARTSSDPGTNTT) are compositionally biased toward polar residues. The interval 314 to 337 (RAKNISGQSPARTSSDPGTNTTTE) is disordered. The segment at 370–478 (TISTSPQPPT…TGEESASSGK (109 aa)) is disordered. Positions 414-427 (DSTASDTPPATTAA) are enriched in low complexity. Asparagine 436, asparagine 454, and asparagine 462 each carry an N-linked (GlcNAc...) asparagine; by host glycan. The span at 447-464 (ATTTSPQNHSETAGNNNT) shows a compositional bias: polar residues. The interval 524–539 (GAAIGLAWIPYFGPAA) is fusion peptide. A coiled-coil region spans residues 554–595 (LICGLRQLANETTQALQLFLRATTELRTFSILNRKAIDFLLQ). An N-linked (GlcNAc...) asparagine; by host glycan is attached at asparagine 563. A coiled-coil region spans residues 615–634 (WTKNITDKIDQIIHDFVDKT). Asparagine 618 is a glycosylation site (N-linked (GlcNAc...) asparagine; by host). The chain crosses the membrane as a helical span at residues 651-671 (WIPAGIGVTGVIIAVIALFCI). Residues cysteine 670 and cysteine 672 are each lipidated (S-palmitoyl cysteine; by host). The Cytoplasmic portion of the chain corresponds to 672-676 (CKFVF).

Belongs to the filoviruses glycoprotein family. Homotrimer; each monomer consists of a GP1 and a GP2 subunit linked by disulfide bonds. The resulting peplomers (GP1,2) protrude from the virus surface as spikes. Interacts with host integrin alpha-V/ITGAV. Interacts with host CLEC10A. Binds also to host CD209 and CLEC4M/DC-SIGN(R). Interacts with host FOLR1. Interacts with BST2; this interaction inhibits the antiviral effect of BST2 and this allows viral release from infected cells. Interacts with host FCN1; this interaction enhances viral entry. Interacts with host TLR4; this interaction induces cell death in T-lymphocytes or proinflammatory cytokines and SOCS1 production in monocytes. As to quaternary structure, interacts with host entry receptor NPC1. In terms of assembly, GP1 and GP2delta are part of GP1,2delta soluble complexes released by ectodomain shedding. Post-translationally, the signal peptide region modulates GP's high mannose glycosylation, thereby determining the efficiency of the interactions with DC-SIGN(R). N-glycosylated. In terms of processing, O-glycosylated in the mucin-like region. Post-translationally, palmitoylation of GP2 is not required for its function. Specific enzymatic cleavages in vivo yield mature proteins. The precursor is processed into GP1 and GP2 by host cell furin in the trans Golgi, and maybe by other host proteases, to yield the mature GP1 and GP2 proteins. The cleavage site corresponds to the furin optimal cleavage sequence [KR]-X-[KR]-R. This cleavage does not seem to be required for function. After the internalization of the virus into cell endosomes, GP1 C-terminus is removed by the endosomal proteases cathepsin B, cathepsin L, or both, leaving a 19-kDa N-terminal fragment which is further digested by cathepsin B. Proteolytic processing of GP1,2 by host ADAM17 can remove the transmembrane anchor of GP2 and leads to shedding of complexes consisting in GP1 and truncated GP2 (GP1,2delta).

The protein resides in the virion membrane. It localises to the host cell membrane. It is found in the secreted. Functionally, trimeric GP1,2 complexes form the virion surface spikes and mediate the viral entry processes, with GP1 acting as the receptor-binding subunit and GP2 as the membrane fusion subunit. At later times of infection, down-regulates the expression of various host cell surface molecules that are essential for immune surveillance and cell adhesion. Down-modulates several integrins including ITGA1, ITGA2, ITGA3, ITGA4, ITGA5, ITGA6, ITGAV and ITGB1. This decrease in cell adhesion molecules may lead to cell detachment, contributing to the disruption of blood vessel integrity and hemorrhages developed during infection (cytotoxicity). Interacts with host TLR4 and thereby stimulates the differentiation and activation of monocytes leading to bystander death of T-lymphocytes. Down-regulates as well the function of host natural killer cells. Counteracts the antiviral effect of host BST2/tetherin that restricts release of progeny virions from infected cells. However, cooperates with VP40 and host BST2 to activate canonical NF-kappa-B pathway in a manner dependent on neddylation. Functions as a decoy for anti-GP1,2 antibodies thereby contributing to viral immune evasion. Interacts and activates host macrophages and dendritic cells inducing up-regulation of cytokine transcription. This effect is mediated throught activation of host TLR4. In terms of biological role, responsible for binding to the receptor(s) on target cells. Interacts with CD209/DC-SIGN and CLEC4M/DC-SIGNR which act as cofactors for virus entry into dendritic cells (DCs) and endothelial cells. Binding to the macrophage specific lectin CLEC10A also seems to enhance virus infectivity. Interaction with FOLR1/folate receptor alpha may be a cofactor for virus entry in some cell types, although results are contradictory. Members of the Tyro3 receptor tyrosine kinase family also seem to be cell entry factors in filovirus infection. Once attached, the virions are internalized through clathrin-dependent endocytosis and/or macropinocytosis. After internalization of the virus into the endosomes of the host cell, proteolysis of GP1 by two cysteine proteases, CTSB/cathepsin B and CTSL/cathepsin L removes the glycan cap and allows GP1 binding to the host entry receptor NPC1. NPC1-binding, Ca(2+) and acidic pH induce a conformational change of GP2, which unmasks its fusion peptide and permit membranes fusion. Its function is as follows. Acts as a class I viral fusion protein. Under the current model, the protein has at least 3 conformational states: pre-fusion native state, pre-hairpin intermediate state, and post-fusion hairpin state. During viral and target cell membrane fusion, the coiled coil regions (heptad repeats) assume a trimer-of-hairpins structure, positioning the fusion peptide in close proximity to the C-terminal region of the ectodomain. The formation of this structure appears to drive apposition and subsequent fusion of viral and target cell membranes. Responsible for penetration of the virus into the cell cytoplasm by mediating the fusion of the membrane of the endocytosed virus particle with the endosomal membrane. Low pH in endosomes induces an irreversible conformational change in GP2, releasing the fusion hydrophobic peptide. The sequence is that of Envelope glycoprotein (GP) from Zaire ebolavirus (strain Kikwit-95) (ZEBOV).